A 387-amino-acid polypeptide reads, in one-letter code: 3-ketoacyl-CoA thiolase (387 aa).

Catalysis depends on Cys91, which acts as the Acyl-thioester intermediate. Active-site proton acceptor residues include His343 and Cys373.

This sequence belongs to the thiolase-like superfamily. Thiolase family. In terms of assembly, heterotetramer of two alpha chains (FadB) and two beta chains (FadA).

Its subcellular location is the cytoplasm. It carries out the reaction an acyl-CoA + acetyl-CoA = a 3-oxoacyl-CoA + CoA. The protein operates within lipid metabolism; fatty acid beta-oxidation. In terms of biological role, catalyzes the final step of fatty acid oxidation in which acetyl-CoA is released and the CoA ester of a fatty acid two carbons shorter is formed. The protein is 3-ketoacyl-CoA thiolase of Aliivibrio fischeri (strain ATCC 700601 / ES114) (Vibrio fischeri).